A 276-amino-acid chain; its full sequence is Shikimate dehydrogenase (NADP(+)) (276 aa).

Residues 15 to 17 (SKS) and Thr62 each bind shikimate. Lys66 (proton acceptor) is an active-site residue. Glu78 contacts NADP(+). Positions 87 and 103 each coordinate shikimate. NADP(+) is bound by residues 127–131 (GAGGV), 150–155 (NRTHIK), and Met214. Tyr216 is a binding site for shikimate. Gly239 is a binding site for NADP(+).

Belongs to the shikimate dehydrogenase family. As to quaternary structure, homodimer.

It carries out the reaction shikimate + NADP(+) = 3-dehydroshikimate + NADPH + H(+). It participates in metabolic intermediate biosynthesis; chorismate biosynthesis; chorismate from D-erythrose 4-phosphate and phosphoenolpyruvate: step 4/7. Involved in the biosynthesis of the chorismate, which leads to the biosynthesis of aromatic amino acids. Catalyzes the reversible NADPH linked reduction of 3-dehydroshikimate (DHSA) to yield shikimate (SA). The protein is Shikimate dehydrogenase (NADP(+)) of Haemophilus ducreyi (strain 35000HP / ATCC 700724).